A 72-amino-acid polypeptide reads, in one-letter code: Large ribosomal subunit protein bL31c (72 aa).

It belongs to the bacterial ribosomal protein bL31 family. Type A subfamily. Part of the 50S ribosomal subunit.

The protein localises to the plastid. It localises to the chloroplast. In terms of biological role, binds the 23S rRNA. This Thalassiosira pseudonana (Marine diatom) protein is Large ribosomal subunit protein bL31c (rpl31).